The chain runs to 362 residues: 2-aminoethylphosphonate--pyruvate transaminase (362 aa).

Position 193 is an N6-(pyridoxal phosphate)lysine (Lys193).

This sequence belongs to the class-V pyridoxal-phosphate-dependent aminotransferase family. PhnW subfamily. Homodimer. Pyridoxal 5'-phosphate serves as cofactor.

The enzyme catalyses (2-aminoethyl)phosphonate + pyruvate = phosphonoacetaldehyde + L-alanine. Involved in phosphonate degradation. The polypeptide is 2-aminoethylphosphonate--pyruvate transaminase (Bacteroides fragilis (strain YCH46)).